A 320-amino-acid chain; its full sequence is FHA domain-containing protein FHA2 (320 aa).

An N-acetylalanine modification is found at Ala-2. In terms of domain architecture, FHA spans 32 to 89 (IILGRNSKKATVDVDLSSLGGGMNISRNHARIFYDFTRRRFSLEVLGKNGCLVEGVLH). The disordered stretch occupies residues 138–211 (VPYHNYQSGP…REGRSKVDRE (74 aa)). The segment covering 163–178 (EYDDEDDDDDDDEEDD) has biased composition (acidic residues). A compositionally biased stretch (basic and acidic residues) spans 198-210 (GEKKREGRSKVDR).

Widely expressed.

Its subcellular location is the nucleus. May play a role in the control of plant organ development and specifically in the regulation of stamen development. Does not show transactivation activity in yeast. In Arabidopsis thaliana (Mouse-ear cress), this protein is FHA domain-containing protein FHA2.